The primary structure comprises 496 residues: Glycerol kinase (496 aa).

T11 serves as a coordination point for ADP. The ATP site is built by T11, T12, and S13. T11 contributes to the sn-glycerol 3-phosphate binding site. R15 contributes to the ADP binding site. Residues R81, E82, Y133, and D242 each contribute to the sn-glycerol 3-phosphate site. Glycerol-binding residues include R81, E82, Y133, D242, and Q243. ADP contacts are provided by T264 and G307. The ATP site is built by T264, G307, Q311, and G408. Residues G408 and N412 each contribute to the ADP site.

This sequence belongs to the FGGY kinase family.

The enzyme catalyses glycerol + ATP = sn-glycerol 3-phosphate + ADP + H(+). The protein operates within polyol metabolism; glycerol degradation via glycerol kinase pathway; sn-glycerol 3-phosphate from glycerol: step 1/1. With respect to regulation, inhibited by fructose 1,6-bisphosphate (FBP). Functionally, key enzyme in the regulation of glycerol uptake and metabolism. Catalyzes the phosphorylation of glycerol to yield sn-glycerol 3-phosphate. This is Glycerol kinase from Trichlorobacter lovleyi (strain ATCC BAA-1151 / DSM 17278 / SZ) (Geobacter lovleyi).